We begin with the raw amino-acid sequence, 112 residues long: MLFFFIYAWCHLSHTILQPSTKIQMIVRSKPESNGEKKLMNHDEPNDQYNQRNYPSEVYADLVSHFMNFAYGKVHESGLQKKGVRCVDVSISGCQFWNGIPLSASWCTSLVT.

This is an uncharacterized protein from Saccharomyces cerevisiae (strain ATCC 204508 / S288c) (Baker's yeast).